The primary structure comprises 405 residues: Arginine biosynthesis bifunctional protein ArgJ (405 aa).

Thr-167, Lys-190, Thr-201, Glu-281, Asn-400, and Ser-405 together coordinate substrate. Catalysis depends on Thr-201, which acts as the Nucleophile.

This sequence belongs to the ArgJ family. As to quaternary structure, heterotetramer of two alpha and two beta chains.

The protein localises to the cytoplasm. It carries out the reaction N(2)-acetyl-L-ornithine + L-glutamate = N-acetyl-L-glutamate + L-ornithine. The catalysed reaction is L-glutamate + acetyl-CoA = N-acetyl-L-glutamate + CoA + H(+). It functions in the pathway amino-acid biosynthesis; L-arginine biosynthesis; L-ornithine and N-acetyl-L-glutamate from L-glutamate and N(2)-acetyl-L-ornithine (cyclic): step 1/1. It participates in amino-acid biosynthesis; L-arginine biosynthesis; N(2)-acetyl-L-ornithine from L-glutamate: step 1/4. Functionally, catalyzes two activities which are involved in the cyclic version of arginine biosynthesis: the synthesis of N-acetylglutamate from glutamate and acetyl-CoA as the acetyl donor, and of ornithine by transacetylation between N(2)-acetylornithine and glutamate. The sequence is that of Arginine biosynthesis bifunctional protein ArgJ from Nocardia farcinica (strain IFM 10152).